Consider the following 182-residue polypeptide: Isopentenyl-diphosphate Delta-isomerase (182 aa).

Residues His25 and His32 each contribute to the Mn(2+) site. Residues 30 to 164 form the Nudix hydrolase domain; the sequence is LLHLAFSSWL…PWAFSPWMVM (135 aa). The active site involves Cys67. His69 lines the Mn(2+) pocket. Glu87 is a binding site for Mg(2+). Mn(2+)-binding residues include Glu114 and Glu116. Glu116 is a catalytic residue.

The protein belongs to the IPP isomerase type 1 family. As to quaternary structure, homodimer. Mg(2+) is required as a cofactor. Mn(2+) serves as cofactor.

Its subcellular location is the cytoplasm. The catalysed reaction is isopentenyl diphosphate = dimethylallyl diphosphate. The protein operates within isoprenoid biosynthesis; dimethylallyl diphosphate biosynthesis; dimethylallyl diphosphate from isopentenyl diphosphate: step 1/1. Functionally, catalyzes the 1,3-allylic rearrangement of the homoallylic substrate isopentenyl (IPP) to its highly electrophilic allylic isomer, dimethylallyl diphosphate (DMAPP). The sequence is that of Isopentenyl-diphosphate Delta-isomerase from Escherichia coli O17:K52:H18 (strain UMN026 / ExPEC).